Here is a 142-residue protein sequence, read N- to C-terminus: Transcriptional regulator MraZ (142 aa).

2 consecutive SpoVT-AbrB domains span residues 5-51 (ASAL…PRPE) and 77-120 (AMDV…DAQT).

This sequence belongs to the MraZ family. Forms oligomers.

It is found in the cytoplasm. The protein resides in the nucleoid. The chain is Transcriptional regulator MraZ from Paraburkholderia phytofirmans (strain DSM 17436 / LMG 22146 / PsJN) (Burkholderia phytofirmans).